Here is a 1648-residue protein sequence, read N- to C-terminus: eIF-2-alpha kinase GCN2 (1648 aa).

Residues 1–26 are disordered; sequence MAGGRGASGRGRAEPQESYSQRQDHE. The 113-residue stretch at 25 to 137 folds into the RWD domain; sequence HELQALEAIY…HHVQSFLSEH (113 aa). The stretch at 146-205 forms a coiled coil; that stretch reads HEEMLERQAQEKQQRLLEARRKEEQEQREILHEIQRRKEEIKEEKKRKEMAKQERLEITS. Position 230 is a phosphoserine (Ser230). Protein kinase domains are found at residues 286–538 and 589–1000; these read VGSD…HSFI and FEEL…SELL. Residues 595–603 and Lys618 contribute to the ATP site; that span reads LGKGAFGAV. A disordered region spans residues 661-784; it reads PAVPGTPPPD…CNQKDGSHEI (124 aa). Thr666 bears the Phosphothreonine mark. Composition is skewed to polar residues over residues 673-686 and 704-722; these read PQAQ…GKTS and LSSS…STRF. Acidic residues-rich tracts occupy residues 730–739 and 753–763; these read SSDEEDEDER and SDSDIIFDNED. The segment covering 775 to 784 has biased composition (basic and acidic residues); the sequence is CNQKDGSHEI. The active-site Proton acceptor is the Asp846. Thr869 is subject to Phosphothreonine. Phosphothreonine; by autocatalysis is present on residues Thr898 and Thr903. Residues 1021 to 1492 form a histidyl-tRNA synthetase-like region; that stretch reads IDGKAYRTMM…DHVMQKLRTK (472 aa). Lys1258 carries the N6-acetyllysine modification.

Belongs to the protein kinase superfamily. Ser/Thr protein kinase family. GCN2 subfamily. Homodimer; homodimerization is important for kinase activation by uncharged tRNAs. Interacts with GCN1; this interaction stimulates EIF2AK4/GCN2 kinase activity and is impaired by IMPACT upon a variety of stress conditions, such as amino acid depletion, UV-C irradiation, proteasome inhibitor treatment and glucose deprivation. Interacts with DNAJC3; this interaction inhibits EIF2AK4/GCN2 kinase activity during endoplasmic reticulum (ER), hypothermic and amino acid-starving stress conditions. Interacts with MAP3K20; activates EIF2AK4/GCN2 kinase activity in response to moderate ribotoxic stress. Autophosphorylated; autophosphorylation on Thr-898 is increased upon amino acid starvation and in UV irradiation cells and inhibited in presence of IMPACT. Expressed in liver. Expressed predominantly in the hippocampal CA1 region and the dentate gyrus, and to a lesser degree in CA3 (at protein level). Expressed in liver, lung, brain, kidney, skeletal muscle and testis. Expressed weakly in heart and spleen. Expressed in the hippocampal CA1 and CA3 regions, the dentate gyrus and cerebellum. Isoform 1 is widely expressed. Isoform 1 is expressed in brain, liver, skeletal muscle and testis. Isoform 3 is expressed in lung, brain, testis, prostate and choroid plexus. Isoform 4 is expressed in muscle, lung, kidney, brain, testis and prostate.

Its subcellular location is the cytoplasm. It carries out the reaction L-seryl-[protein] + ATP = O-phospho-L-seryl-[protein] + ADP + H(+). It catalyses the reaction L-threonyl-[protein] + ATP = O-phospho-L-threonyl-[protein] + ADP + H(+). With respect to regulation, (Microbial infection) Kinase activity is enhanced by alphavirus genomic RNA sequences. Kinase activity is stimulated upon binding to uncharged tRNAs. Activated by serum starvation (in vitro). Metabolic-stress sensing protein kinase that phosphorylates the alpha subunit of eukaryotic translation initiation factor 2 (EIF2S1/eIF-2-alpha) in response to low amino acid availability. Plays a role as an activator of the integrated stress response (ISR) required for adaptation to amino acid starvation. EIF2S1/eIF-2-alpha phosphorylation in response to stress converts EIF2S1/eIF-2-alpha into a global protein synthesis inhibitor, leading to a global attenuation of cap-dependent translation, and thus to a reduced overall utilization of amino acids, while concomitantly initiating the preferential translation of ISR-specific mRNAs, such as the transcriptional activator ATF4, and hence allowing ATF4-mediated reprogramming of amino acid biosynthetic gene expression to alleviate nutrient depletion. Required for the translational induction of protein kinase PRKCH following amino acid starvation. Binds uncharged tRNAs. Involved in cell cycle arrest by promoting cyclin D1 mRNA translation repression after the unfolded protein response pathway (UPR) activation or cell cycle inhibitor CDKN1A/p21 mRNA translation activation in response to amino acid deprivation. Plays a role in the consolidation of synaptic plasticity, learning as well as formation of long-term memory. Plays a role in neurite outgrowth inhibition. Plays a role in feeding behavior to maintain amino acid homeostasis; contributes to the innate aversion toward diets of imbalanced amino acid composition. Plays a proapoptotic role in response to glucose deprivation. Promotes global cellular protein synthesis repression in response to UV irradiation independently of the stress-activated protein kinase/c-Jun N-terminal kinase (SAPK/JNK) and p38 MAPK signaling pathways. In terms of biological role, (Microbial infection) Plays a role in the antiviral response against alphavirus infection; impairs early viral mRNA translation of the incoming genomic virus RNA, thus preventing alphavirus replication. Its function is as follows. (Microbial infection) Plays a role in modulating the adaptive immune response to Yellow fever virus infection; promotes dendritic cells to initiate autophagy and antigene presentation to both CD4(+) and CD8(+) T-cells under amino acid starvation. This Mus musculus (Mouse) protein is eIF-2-alpha kinase GCN2.